Reading from the N-terminus, the 220-residue chain is Deoxyribose-phosphate aldolase (220 aa).

Asp-89 functions as the Proton donor/acceptor in the catalytic mechanism. Lys-151 (schiff-base intermediate with acetaldehyde) is an active-site residue. Residue Lys-180 is the Proton donor/acceptor of the active site.

Belongs to the DeoC/FbaB aldolase family. DeoC type 1 subfamily.

The protein resides in the cytoplasm. The catalysed reaction is 2-deoxy-D-ribose 5-phosphate = D-glyceraldehyde 3-phosphate + acetaldehyde. Its pathway is carbohydrate degradation; 2-deoxy-D-ribose 1-phosphate degradation; D-glyceraldehyde 3-phosphate and acetaldehyde from 2-deoxy-alpha-D-ribose 1-phosphate: step 2/2. Catalyzes a reversible aldol reaction between acetaldehyde and D-glyceraldehyde 3-phosphate to generate 2-deoxy-D-ribose 5-phosphate. This Staphylococcus haemolyticus (strain JCSC1435) protein is Deoxyribose-phosphate aldolase.